A 271-amino-acid chain; its full sequence is Small ribosomal subunit protein uS3 (271 aa).

Residues isoleucine 40–arginine 108 form the KH type-2 domain. Positions proline 210–asparagine 271 are disordered. Residues valine 215–aspartate 247 are compositionally biased toward basic and acidic residues.

This sequence belongs to the universal ribosomal protein uS3 family. In terms of assembly, part of the 30S ribosomal subunit. Forms a tight complex with proteins S10 and S14.

In terms of biological role, binds the lower part of the 30S subunit head. Binds mRNA in the 70S ribosome, positioning it for translation. The sequence is that of Small ribosomal subunit protein uS3 from Clostridioides difficile (strain 630) (Peptoclostridium difficile).